We begin with the raw amino-acid sequence, 423 residues long: Glucose-1-phosphate adenylyltransferase (423 aa).

Alpha-D-glucose 1-phosphate-binding positions include tyrosine 98, glycine 163, 178–179 (EK), and serine 189.

The protein belongs to the bacterial/plant glucose-1-phosphate adenylyltransferase family. Homotetramer.

It carries out the reaction alpha-D-glucose 1-phosphate + ATP + H(+) = ADP-alpha-D-glucose + diphosphate. Its pathway is glycan biosynthesis; glycogen biosynthesis. Its function is as follows. Involved in the biosynthesis of ADP-glucose, a building block required for the elongation reactions to produce glycogen. Catalyzes the reaction between ATP and alpha-D-glucose 1-phosphate (G1P) to produce pyrophosphate and ADP-Glc. This chain is Glucose-1-phosphate adenylyltransferase, found in Thermotoga sp. (strain RQ2).